A 298-amino-acid polypeptide reads, in one-letter code: Lipoyl synthase (298 aa).

[4Fe-4S] cluster contacts are provided by C40, C45, C51, C67, C71, C74, and S280. A Radical SAM core domain is found at A53 to S269.

It belongs to the radical SAM superfamily. Lipoyl synthase family. [4Fe-4S] cluster serves as cofactor.

It localises to the cytoplasm. The catalysed reaction is [[Fe-S] cluster scaffold protein carrying a second [4Fe-4S](2+) cluster] + N(6)-octanoyl-L-lysyl-[protein] + 2 oxidized [2Fe-2S]-[ferredoxin] + 2 S-adenosyl-L-methionine + 4 H(+) = [[Fe-S] cluster scaffold protein] + N(6)-[(R)-dihydrolipoyl]-L-lysyl-[protein] + 4 Fe(3+) + 2 hydrogen sulfide + 2 5'-deoxyadenosine + 2 L-methionine + 2 reduced [2Fe-2S]-[ferredoxin]. The protein operates within protein modification; protein lipoylation via endogenous pathway; protein N(6)-(lipoyl)lysine from octanoyl-[acyl-carrier-protein]. Catalyzes the radical-mediated insertion of two sulfur atoms into the C-6 and C-8 positions of the octanoyl moiety bound to the lipoyl domains of lipoate-dependent enzymes, thereby converting the octanoylated domains into lipoylated derivatives. This Geobacillus thermodenitrificans (strain NG80-2) protein is Lipoyl synthase.